A 376-amino-acid polypeptide reads, in one-letter code: uncharacterized protein (376 aa).

Positions 82 to 372 (KIYDDSAVEK…ATSGILWRAL (291 aa)) constitute a Peptidase M14 domain. Residues H138, E141, and H283 each coordinate Zn(2+). E344 functions as the Proton donor/acceptor in the catalytic mechanism.

Belongs to the peptidase M14 family. Zn(2+) serves as cofactor.

This is an uncharacterized protein from Bacillus subtilis (strain 168).